Here is a 231-residue protein sequence, read N- to C-terminus: Cytochrome b-c1 complex subunit Rieske, mitochondrial (231 aa).

A mitochondrion-targeting transit peptide spans 1–24; it reads MAPVSIVSRAAMRAAAAPARAVRA. Residues 25–32 constitute a propeptide, removed in mature form; that stretch reads LTTSTALQ. Topologically, residues 33–65 are mitochondrial matrix; the sequence is GSSSSTFESPFKGESKAAKVPDFGKYMSKAPPS. Residues 66 to 95 traverse the membrane as a helical segment; the sequence is TNMLFSYFMVGTMGAITAAGAKSTIQEFLK. At 96–231 the chain is on the mitochondrial intermembrane side; the sequence is NMSASADVLA…FPEEGKLVIG (136 aa). Residues 134 to 229 enclose the Rieske domain; the sequence is RHRTPAEIEE…YEFPEEGKLV (96 aa). Cys-174, His-176, Cys-193, and His-196 together coordinate [2Fe-2S] cluster. An intrachain disulfide couples Cys-179 to Cys-195.

The protein belongs to the Rieske iron-sulfur protein family. As to quaternary structure, component of the ubiquinol-cytochrome c oxidoreductase (cytochrome b-c1 complex, complex III, CIII), a multisubunit enzyme composed of 10 subunits. The complex is composed of 3 respiratory subunits cytochrome b (cob), cytochrome c1 (cyt-1) and Rieske protein (fes-1), 2 core protein subunits pep and ucr-1, and 5 low-molecular weight protein subunits qcr6, qcr7, qcr8, qcr9 and probably NCU16844/qcr10. The complex exists as an obligatory dimer and forms supercomplexes (SCs) in the inner mitochondrial membrane with NADH-ubiquinone oxidoreductase (complex I, CI) and cytochrome c oxidase (complex IV, CIV), resulting in different assemblies (supercomplexes SCI(1)III(2), SCIII(2)IV(1) and SCIII(2)IV(2) as well as higher order I(x)III(y)IV(z) megacomplexes). [2Fe-2S] cluster serves as cofactor. Post-translationally, processed by both the mitochondrial processing peptidase (MPP) and the mitochondrial intermediate protease (MIP). Initially, MPP removes 25 amino acids from the newly imported precursor in the mitochondrial matrix. This proteolytic processing is then followed by a second proteolytic cleavage by MIP, which removes an octapeptide to generate mature-sized Rieske protein.

The protein resides in the mitochondrion inner membrane. It catalyses the reaction a quinol + 2 Fe(III)-[cytochrome c](out) = a quinone + 2 Fe(II)-[cytochrome c](out) + 2 H(+)(out). In terms of biological role, component of the ubiquinol-cytochrome c oxidoreductase, a multisubunit transmembrane complex that is part of the mitochondrial electron transport chain which drives oxidative phosphorylation. The respiratory chain contains 3 multisubunit complexes succinate dehydrogenase (complex II, CII), ubiquinol-cytochrome c oxidoreductase (cytochrome b-c1 complex, complex III, CIII) and cytochrome c oxidase (complex IV, CIV), that cooperate to transfer electrons derived from NADH and succinate to molecular oxygen, creating an electrochemical gradient over the inner membrane that drives transmembrane transport and the ATP synthase. The cytochrome b-c1 complex catalyzes electron transfer from ubiquinol to cytochrome c, linking this redox reaction to translocation of protons across the mitochondrial inner membrane, with protons being carried across the membrane as hydrogens on the quinol. In the process called Q cycle, 2 protons are consumed from the matrix, 4 protons are released into the intermembrane space and 2 electrons are passed to cytochrome c. The Rieske protein is a catalytic core subunit containing a [2Fe-2S] iron-sulfur cluster. It cycles between 2 conformational states during catalysis to transfer electrons from the quinol bound in the Q(0) site in cytochrome b to cytochrome c1. The chain is Cytochrome b-c1 complex subunit Rieske, mitochondrial (fes-1) from Neurospora crassa (strain ATCC 24698 / 74-OR23-1A / CBS 708.71 / DSM 1257 / FGSC 987).